The primary structure comprises 554 residues: Undecaprenyl phosphate-alpha-4-amino-4-deoxy-L-arabinose arabinosyl transferase (554 aa).

Transmembrane regions (helical) follow at residues leucine 4–valine 24, phenylalanine 87–leucine 107, valine 115–valine 135, phenylalanine 178–isoleucine 198, leucine 206–leucine 226, tyrosine 262–phenylalanine 282, glutamate 293–glycine 313, leucine 315–threonine 335, valine 351–leucine 371, glutamine 384–leucine 404, and alanine 414–valine 434.

Belongs to the glycosyltransferase 83 family.

It localises to the cell inner membrane. It catalyses the reaction 4-amino-4-deoxy-alpha-L-arabinopyranosyl di-trans,octa-cis-undecaprenyl phosphate + lipid IVA = lipid IIA + di-trans,octa-cis-undecaprenyl phosphate.. Its pathway is lipopolysaccharide metabolism; 4-amino-4-deoxy-beta-L-arabinose-lipid A biosynthesis. Functionally, catalyzes the transfer of the L-Ara4N moiety of the glycolipid undecaprenyl phosphate-alpha-L-Ara4N to lipid A. The modified arabinose is attached to lipid A and is required for resistance to polymyxin and cationic antimicrobial peptides. This Yersinia pseudotuberculosis serotype O:1b (strain IP 31758) protein is Undecaprenyl phosphate-alpha-4-amino-4-deoxy-L-arabinose arabinosyl transferase.